Here is a 140-residue protein sequence, read N- to C-terminus: ATP synthase epsilon chain, chloroplastic (140 aa).

This sequence belongs to the ATPase epsilon chain family. F-type ATPases have 2 components, CF(1) - the catalytic core - and CF(0) - the membrane proton channel. CF(1) has five subunits: alpha(3), beta(3), gamma(1), delta(1), epsilon(1). CF(0) has three main subunits: a, b and c.

The protein resides in the plastid. It localises to the chloroplast thylakoid membrane. Produces ATP from ADP in the presence of a proton gradient across the membrane. This Panax ginseng (Korean ginseng) protein is ATP synthase epsilon chain, chloroplastic.